The following is a 186-amino-acid chain: Large ribosomal subunit protein uL5 (186 aa).

It belongs to the universal ribosomal protein uL5 family. As to quaternary structure, part of the 50S ribosomal subunit; part of the 5S rRNA/L5/L18/L25 subcomplex. Contacts the 5S rRNA and the P site tRNA. Forms a bridge to the 30S subunit in the 70S ribosome.

Its function is as follows. This is one of the proteins that bind and probably mediate the attachment of the 5S RNA into the large ribosomal subunit, where it forms part of the central protuberance. In the 70S ribosome it contacts protein S13 of the 30S subunit (bridge B1b), connecting the 2 subunits; this bridge is implicated in subunit movement. Contacts the P site tRNA; the 5S rRNA and some of its associated proteins might help stabilize positioning of ribosome-bound tRNAs. The polypeptide is Large ribosomal subunit protein uL5 (Karelsulcia muelleri (strain GWSS) (Sulcia muelleri)).